The following is a 304-amino-acid chain: Cell surface-binding protein OPG105 (304 aa).

In terms of domain architecture, Alpha-carbonic anhydrase spans 1–235 (MSQQLSPINI…NDDTEVYYSG (235 aa)). Residues 1–275 (MSQQLSPINI…YQKYIEGNKT (275 aa)) lie on the Virion surface side of the membrane. The chain crosses the membrane as a helical span at residues 276–294 (FAIIAIVFVYILTAILFLM). Topologically, residues 295-304 (SRRYSREKQN) are intravirion.

It belongs to the alpha-carbonic anhydrase family. In terms of assembly, homodimer; disulfide-linked. Post-translationally, apparently non-glycosylated.

It is found in the virion membrane. Binds to chondroitin sulfate on the cell surface to provide virion attachment to target cell. This chain is Cell surface-binding protein OPG105 (OPG105), found in Homo sapiens (Human).